The primary structure comprises 38 residues: Photosystem II reaction center protein L (38 aa).

A helical membrane pass occupies residues 17 to 37 (SLYWGLLLIFVLAILFSNYIF).

Belongs to the PsbL family. PSII is composed of 1 copy each of membrane proteins PsbA, PsbB, PsbC, PsbD, PsbE, PsbF, PsbH, PsbI, PsbJ, PsbK, PsbL, PsbM, PsbT, PsbX, PsbY, PsbZ, Psb30/Ycf12, at least 3 peripheral proteins of the oxygen-evolving complex and a large number of cofactors. It forms dimeric complexes.

It is found in the plastid. It localises to the chloroplast thylakoid membrane. Its function is as follows. One of the components of the core complex of photosystem II (PSII). PSII is a light-driven water:plastoquinone oxidoreductase that uses light energy to abstract electrons from H(2)O, generating O(2) and a proton gradient subsequently used for ATP formation. It consists of a core antenna complex that captures photons, and an electron transfer chain that converts photonic excitation into a charge separation. This subunit is found at the monomer-monomer interface and is required for correct PSII assembly and/or dimerization. The chain is Photosystem II reaction center protein L from Chlorokybus atmophyticus (Soil alga).